The primary structure comprises 321 residues: Mas-related G-protein coupled receptor member B4 (321 aa).

At 1-33 the chain is on the extracellular side; it reads MGTTTLAWNINNTAENGSYTEMFSCITKFNTLN. 2 N-linked (GlcNAc...) asparagine glycosylation sites follow: Asn-11 and Asn-16. Residues 34 to 54 traverse the membrane as a helical segment; the sequence is FLTVIIAVVGLAGNGIVLWLL. Over 55-62 the chain is Cytoplasmic; sequence AFHLHRNA. A helical transmembrane segment spans residues 63 to 83; sequence FSVYVLNLAGADFLYLFTQVV. The Extracellular portion of the chain corresponds to 84-97; it reads HSLECVLQLDNNSF. An N-linked (GlcNAc...) asparagine glycan is attached at Asn-94. The chain crosses the membrane as a helical span at residues 98–118; sequence YILLIVTMFAYLAGLCMIAAI. At 119–146 the chain is on the cytoplasmic side; the sequence is SAERCLSVMWPIWYHCQRPRHTSAIMCA. Residues 147 to 167 form a helical membrane-spanning segment; that stretch reads LVWVSSLLLSLVVGLGCGFLF. Topologically, residues 168-172 are extracellular; sequence SYYDY. Residues 173–193 form a helical membrane-spanning segment; that stretch reads YFCITLNFITAAFLIVLSVVL. Over 194–215 the chain is Cytoplasmic; that stretch reads SVSSLALLVKIVWGSHRIPVTR. A helical transmembrane segment spans residues 216 to 236; the sequence is FFVTIALTVVVFIYFGMPFGI. Topologically, residues 237–257 are extracellular; the sequence is CWFLLSRIMEFDSIFFNNVYE. A helical membrane pass occupies residues 258–278; it reads IIEFLSCVNSCANPIIYFLVG. At 279 to 321 the chain is on the cytoplasmic side; it reads SIRQHRLRWQSLKLLLQRAMQDTPEEESGERGPSQRSGELETV. Residues 299–321 are disordered; sequence QDTPEEESGERGPSQRSGELETV.

This sequence belongs to the G-protein coupled receptor 1 family. Mas subfamily.

Its subcellular location is the membrane. Functionally, orphan receptor. Probably involved in the function of nociceptive neurons. May regulate nociceptor function and/or development, including the sensation or modulation of pain. This Mus musculus (Mouse) protein is Mas-related G-protein coupled receptor member B4 (Mrgprb4).